The sequence spans 145 residues: MIALIQRVSSASVTVEGKVIGEIDKGLLILLGVEQGDDEQKATRLCERVLGYRIFGDDDGKMNLNVRQAGGNVLVVSQFTLVADTQRGMRPGFSRGAHPSEADRLYQYFVGQCREQGVHTETGQFAADMKVALVNDGPVTFWLQT.

Residues 137–138 (GP) carry the Gly-cisPro motif, important for rejection of L-amino acids motif.

Belongs to the DTD family. In terms of assembly, homodimer.

It localises to the cytoplasm. It carries out the reaction glycyl-tRNA(Ala) + H2O = tRNA(Ala) + glycine + H(+). The enzyme catalyses a D-aminoacyl-tRNA + H2O = a tRNA + a D-alpha-amino acid + H(+). In terms of biological role, an aminoacyl-tRNA editing enzyme that deacylates mischarged D-aminoacyl-tRNAs. Also deacylates mischarged glycyl-tRNA(Ala), protecting cells against glycine mischarging by AlaRS. Acts via tRNA-based rather than protein-based catalysis; rejects L-amino acids rather than detecting D-amino acids in the active site. By recycling D-aminoacyl-tRNA to D-amino acids and free tRNA molecules, this enzyme counteracts the toxicity associated with the formation of D-aminoacyl-tRNA entities in vivo and helps enforce protein L-homochirality. The sequence is that of D-aminoacyl-tRNA deacylase from Pectobacterium carotovorum subsp. carotovorum (strain PC1).